Reading from the N-terminus, the 985-residue chain is Phosphoenolpyruvate carboxylase (985 aa).

A compositionally biased stretch (low complexity) spans M1–R17. The interval M1–D55 is disordered. Catalysis depends on residues H193 and K634.

This sequence belongs to the PEPCase type 1 family. It depends on Mg(2+) as a cofactor.

It carries out the reaction oxaloacetate + phosphate = phosphoenolpyruvate + hydrogencarbonate. Its function is as follows. Forms oxaloacetate, a four-carbon dicarboxylic acid source for the tricarboxylic acid cycle. This chain is Phosphoenolpyruvate carboxylase, found in Ralstonia nicotianae (strain ATCC BAA-1114 / GMI1000) (Ralstonia solanacearum).